The sequence spans 378 residues: Probable tRNA sulfurtransferase (378 aa).

Residues 51-153 (DANLEKLQYV…SDKTYLFSKT (103 aa)) enclose the THUMP domain. ATP contacts are provided by residues 171–172 (LM), 196–197 (SF), Arg-253, Gly-275, and Gln-284.

Belongs to the ThiI family.

It localises to the cytoplasm. It catalyses the reaction [ThiI sulfur-carrier protein]-S-sulfanyl-L-cysteine + a uridine in tRNA + 2 reduced [2Fe-2S]-[ferredoxin] + ATP + H(+) = [ThiI sulfur-carrier protein]-L-cysteine + a 4-thiouridine in tRNA + 2 oxidized [2Fe-2S]-[ferredoxin] + AMP + diphosphate. It carries out the reaction [ThiS sulfur-carrier protein]-C-terminal Gly-Gly-AMP + S-sulfanyl-L-cysteinyl-[cysteine desulfurase] + AH2 = [ThiS sulfur-carrier protein]-C-terminal-Gly-aminoethanethioate + L-cysteinyl-[cysteine desulfurase] + A + AMP + 2 H(+). The protein operates within cofactor biosynthesis; thiamine diphosphate biosynthesis. Catalyzes the ATP-dependent transfer of a sulfur to tRNA to produce 4-thiouridine in position 8 of tRNAs, which functions as a near-UV photosensor. Also catalyzes the transfer of sulfur to the sulfur carrier protein ThiS, forming ThiS-thiocarboxylate. This is a step in the synthesis of thiazole, in the thiamine biosynthesis pathway. The sulfur is donated as persulfide by IscS. This chain is Probable tRNA sulfurtransferase, found in Mycoplasmopsis agalactiae (strain NCTC 10123 / CIP 59.7 / PG2) (Mycoplasma agalactiae).